Here is a 220-residue protein sequence, read N- to C-terminus: Ribonuclease HII (220 aa).

Positions 1–219 (MMIAGIDEAG…VENIREELKK (219 aa)) constitute an RNase H type-2 domain. Asp-7, Glu-8, and Asp-105 together coordinate a divalent metal cation.

This sequence belongs to the RNase HII family. Mn(2+) is required as a cofactor. Requires Mg(2+) as cofactor.

The protein localises to the cytoplasm. The catalysed reaction is Endonucleolytic cleavage to 5'-phosphomonoester.. Endonuclease that specifically degrades the RNA of RNA-DNA hybrids. The sequence is that of Ribonuclease HII from Methanosarcina mazei (strain ATCC BAA-159 / DSM 3647 / Goe1 / Go1 / JCM 11833 / OCM 88) (Methanosarcina frisia).